The sequence spans 176 residues: MGYPKEGETIQIQSYKHNGLIHRIWNETTILKATELCIIGANDRTMVTESDGRTWMTREPAICYFHAKQWFNVIGMLRDDGVYYYCNISSPFATDEEAIKYIDYDLDVKVFPDMTYNILDEDEYADHKRQMNYPKEIDSILREHLNTLLHWIHQRKGPFAPEFVDMWYERFLHYTK.

The active-site Proton donor is the arginine 23. Residues asparagine 87, aspartate 103, aspartate 105, aspartate 107, aspartate 120, and glutamate 123 each coordinate Mg(2+).

It belongs to the Ntdp family. It depends on Mg(2+) as a cofactor.

It carries out the reaction a ribonucleoside 5'-triphosphate + H2O = a ribonucleoside 5'-diphosphate + phosphate + H(+). It catalyses the reaction a ribonucleoside 5'-diphosphate + H2O = a ribonucleoside 5'-phosphate + phosphate + H(+). Its function is as follows. Has nucleoside phosphatase activity towards nucleoside triphosphates and nucleoside diphosphates. This Bacillus pumilus (strain SAFR-032) protein is Nucleoside triphosphate/diphosphate phosphatase.